Here is a 507-residue protein sequence, read N- to C-terminus: ATP synthase subunit alpha, chloroplastic (507 aa).

ATP is bound at residue Gly170–Thr177.

This sequence belongs to the ATPase alpha/beta chains family. As to quaternary structure, F-type ATPases have 2 components, CF(1) - the catalytic core - and CF(0) - the membrane proton channel. CF(1) has five subunits: alpha(3), beta(3), gamma(1), delta(1), epsilon(1). CF(0) has four main subunits: a, b, b' and c.

The protein resides in the plastid. The protein localises to the chloroplast thylakoid membrane. The catalysed reaction is ATP + H2O + 4 H(+)(in) = ADP + phosphate + 5 H(+)(out). In terms of biological role, produces ATP from ADP in the presence of a proton gradient across the membrane. The alpha chain is a regulatory subunit. The chain is ATP synthase subunit alpha, chloroplastic from Illicium oligandrum (Star anise).